The chain runs to 1026 residues: Unconventional myosin-Ic (1026 aa).

Methionine 1 carries the N-acetylmethionine modification. The region spanning 12 to 695 (GVQDFLLLEN…TLFITEDALE (684 aa)) is the Myosin motor domain. ATP-binding positions include asparagine 53, tyrosine 61, 104 to 113 (SGESGAGKTE), and 157 to 161 (NDNSS). Residue lysine 349 is modified to N6-methyllysine. An actin-binding region spans residues 572-594 (LAKLMDILMSKEPSYVRCIKPND). IQ domains lie at 698–727 (KQTI…AVIV) and 721–750 (IRHA…AADT). Residues 849–1024 (KDGYSRSVPK…NGHLSVTTPR (176 aa)) enclose the TH1 domain.

The protein belongs to the TRAFAC class myosin-kinesin ATPase superfamily. Myosin family. As to quaternary structure, interacts (via its IQ motifs) with calm.

Its subcellular location is the cytoplasm. It localises to the cell cortex. It is found in the cell projection. The protein resides in the ruffle membrane. The protein localises to the cytoplasmic vesicle. Its subcellular location is the stereocilium membrane. In terms of biological role, myosins are actin-based motor molecules with ATPase activity. Unconventional myosins serve in intracellular movements. Their highly divergent tails are presumed to bind to membranous compartments, which would be moved relative to actin filaments. In Danio rerio (Zebrafish), this protein is Unconventional myosin-Ic (myo1c).